The sequence spans 501 residues: L-arabinose isomerase (501 aa).

Mn(2+) contacts are provided by glutamate 306, glutamate 333, histidine 350, and histidine 450.

Belongs to the arabinose isomerase family. In terms of assembly, homohexamer. Mn(2+) is required as a cofactor.

The enzyme catalyses beta-L-arabinopyranose = L-ribulose. The protein operates within carbohydrate degradation; L-arabinose degradation via L-ribulose; D-xylulose 5-phosphate from L-arabinose (bacterial route): step 1/3. Catalyzes the conversion of L-arabinose to L-ribulose. The chain is L-arabinose isomerase from Serratia proteamaculans (strain 568).